The sequence spans 203 residues: Monothiol glutaredoxin-7 (203 aa).

Residues 1–32 (MAIVINKRNVRVLVITNLLLIVVFFVLRNSNA) form the signal peptide. A Glutaredoxin domain is found at 88 to 191 (AAEYNKIMEQ…DSFKKWSDGA (104 aa)). Position 108 (cysteine 108) interacts with [2Fe-2S] cluster.

This sequence belongs to the glutaredoxin family. Monothiol subfamily.

The chain is Monothiol glutaredoxin-7 (GRX7) from Saccharomyces cerevisiae (strain ATCC 204508 / S288c) (Baker's yeast).